A 36-amino-acid polypeptide reads, in one-letter code: Phosphoglycerate kinase, chloroplastic (36 aa).

Alanine 22, aspartate 23, and asparagine 25 together coordinate (2R)-3-phosphoglycerate.

The protein belongs to the phosphoglycerate kinase family. In terms of assembly, monomer. Requires Mg(2+) as cofactor.

Its subcellular location is the plastid. The protein resides in the chloroplast. The catalysed reaction is (2R)-3-phosphoglycerate + ATP = (2R)-3-phospho-glyceroyl phosphate + ADP. It functions in the pathway carbohydrate biosynthesis; Calvin cycle. The protein is Phosphoglycerate kinase, chloroplastic of Scenedesmus fuscus (Green alga).